A 410-amino-acid chain; its full sequence is Transforming growth factor beta-3 proprotein (410 aa).

The first 23 residues, Met-1–Ser-23, serve as a signal peptide directing secretion. Residues Asn-72, Asn-133, and Asn-140 are each glycosylated (N-linked (GlcNAc...) asparagine). Positions Arg-259–Asp-261 match the Cell attachment site motif. N5-methylglutamine is present on Gln-291. 4 cysteine pairs are disulfide-bonded: Cys-305/Cys-314, Cys-313/Cys-376, Cys-342/Cys-407, and Cys-346/Cys-409.

It belongs to the TGF-beta family. Interacts with ASPN. Latency-associated peptide: Homodimer; disulfide-linked. Latency-associated peptide: Interacts with Transforming growth factor beta-3 (TGF-beta-3) chain; interaction is non-covalent and maintains (TGF-beta-3) in a latent state. Latency-associated peptide: Interacts with LRRC32/GARP; leading to regulate activation of TGF-beta-3 and promote epithelial fusion during palate development. Latency-associated peptide: Interacts (via cell attachment site) with integrins, leading to release of the active TGF-beta-3. Transforming growth factor beta-3: Homodimer; disulfide-linked. Transforming growth factor beta-3: Interacts with TGF-beta receptors (TGFBR1 and TGFBR2), leading to signal transduction. In terms of processing, transforming growth factor beta-3 proprotein: The precursor proprotein is cleaved in the Golgi apparatus to form Transforming growth factor beta-3 (TGF-beta-3) and Latency-associated peptide (LAP) chains, which remain non-covalently linked, rendering TGF-beta-3 inactive. Post-translationally, methylated at Gln-291 by N6AMT1. Expressed in mammary glands with a slight increase in expression prior to lactation and again increasing at the onset of involution, expression peaks at day 3 of involution.

The protein localises to the secreted. Its subcellular location is the extracellular space. It localises to the extracellular matrix. Its function is as follows. Transforming growth factor beta-3 proprotein: Precursor of the Latency-associated peptide (LAP) and Transforming growth factor beta-3 (TGF-beta-3) chains, which constitute the regulatory and active subunit of TGF-beta-3, respectively. Functionally, required to maintain the Transforming growth factor beta-3 (TGF-beta-3) chain in a latent state during storage in extracellular matrix. Associates non-covalently with TGF-beta-3 and regulates its activation via interaction with 'milieu molecules', such as LTBP1 and LRRC32/GARP, that control activation of TGF-beta-3. Interaction with integrins results in distortion of the Latency-associated peptide chain and subsequent release of the active TGF-beta-3. In terms of biological role, transforming growth factor beta-3: Multifunctional protein that regulates embryogenesis and cell differentiation and is required in various processes such as secondary palate development. Activation into mature form follows different steps: following cleavage of the proprotein in the Golgi apparatus, Latency-associated peptide (LAP) and Transforming growth factor beta-3 (TGF-beta-3) chains remain non-covalently linked rendering TGF-beta-3 inactive during storage in extracellular matrix. At the same time, LAP chain interacts with 'milieu molecules', such as LTBP1 and LRRC32/GARP that control activation of TGF-beta-3 and maintain it in a latent state during storage in extracellular milieus. TGF-beta-3 is released from LAP by integrins: integrin-binding results in distortion of the LAP chain and subsequent release of the active TGF-beta-3. Once activated following release of LAP, TGF-beta-3 acts by binding to TGF-beta receptors (TGFBR1 and TGFBR2), which transduce signal. The sequence is that of Transforming growth factor beta-3 proprotein from Mus musculus (Mouse).